Reading from the N-terminus, the 637-residue chain is Nuclear receptor-binding protein homolog (637 aa).

Over residues M1–T14 the composition is skewed to polar residues. 2 disordered regions span residues M1 to A60 and S74 to E99. Positions P36 to Q46 are enriched in low complexity. Acidic residues predominate over residues D88–E98. The Protein kinase domain maps to R109–L375. Disordered regions lie at residues P465–D489 and P617–N637. Residues S473, S479, and S482 each carry the phosphoserine modification. A Phosphothreonine modification is found at T484.

The protein belongs to the protein kinase superfamily. Ser/Thr protein kinase family.

It localises to the cytoplasm. The protein localises to the cell cortex. Functionally, may play a role in subcellular trafficking between the endoplasmic reticulum and Golgi apparatus. The chain is Nuclear receptor-binding protein homolog from Drosophila melanogaster (Fruit fly).